The chain runs to 430 residues: Adenylosuccinate synthetase (430 aa).

Residues 12–18 (GDEGKGK) and 40–42 (GHT) each bind GTP. Aspartate 13 (proton acceptor) is an active-site residue. Residues aspartate 13 and glycine 40 each coordinate Mg(2+). IMP contacts are provided by residues 13–16 (DEGK), 38–41 (NAGH), threonine 128, arginine 142, glutamine 223, threonine 238, and arginine 302. The active-site Proton donor is the histidine 41. A substrate-binding site is contributed by 298–304 (TTTGRPR). Residues arginine 304, 330 to 332 (SID), and 412 to 414 (SVG) each bind GTP.

It belongs to the adenylosuccinate synthetase family. In terms of assembly, homodimer. Mg(2+) serves as cofactor.

The protein localises to the cytoplasm. It catalyses the reaction IMP + L-aspartate + GTP = N(6)-(1,2-dicarboxyethyl)-AMP + GDP + phosphate + 2 H(+). Its pathway is purine metabolism; AMP biosynthesis via de novo pathway; AMP from IMP: step 1/2. In terms of biological role, plays an important role in the de novo pathway of purine nucleotide biosynthesis. Catalyzes the first committed step in the biosynthesis of AMP from IMP. The sequence is that of Adenylosuccinate synthetase from Streptococcus equi subsp. zooepidemicus (strain H70).